A 626-amino-acid chain; its full sequence is Colicin-Ia (626 aa).

The translocation (T) stretch occupies residues 23–225; sequence EIMAVDIYVN…TRLSELEKNG (203 aa). A compositionally biased stretch (polar residues) spans 276–286; it reads QQLTQQKNTPD. Residues 276–308 form a disordered region; it reads QQLTQQKNTPDGKTIVSPEKFPGRSSTNHSIVV. The interval 282–385 is receptor-binding (R); sequence KNTPDGKTIV…LRQRLLDARN (104 aa). Positions 450–626 are channel (C); the sequence is KDAINFTTEF…VEKANKFWGI (177 aa). A run of 2 helical transmembrane segments spans residues 580 to 594 and 597 to 612; these read ATALVALVFSILTGS and GIIGYGLLMAVTGALI.

This sequence belongs to the channel forming colicin family.

The protein resides in the cell membrane. This colicin is a channel-forming colicin. This class of transmembrane toxins depolarize the cytoplasmic membrane, leading to dissipation of cellular energy. In terms of biological role, colicins are polypeptide toxins produced by and active against E.coli and closely related bacteria. The polypeptide is Colicin-Ia (cia) (Escherichia coli).